The chain runs to 874 residues: UPF0182 protein Sfum_2137 (874 aa).

7 helical membrane passes run 7-27 (WPLI…LSSL), 57-77 (IVFG…FWVA), 110-130 (SLWV…LPIF), 171-191 (RRLL…YLLE), 208-228 (LHLS…YVLQ), 252-272 (VIWA…FSMI), and 283-303 (PLVV…SAFL).

This sequence belongs to the UPF0182 family.

It localises to the cell membrane. This Syntrophobacter fumaroxidans (strain DSM 10017 / MPOB) protein is UPF0182 protein Sfum_2137.